The following is a 155-amino-acid chain: Ribosome maturation factor RimP (155 aa).

Belongs to the RimP family.

The protein localises to the cytoplasm. Functionally, required for maturation of 30S ribosomal subunits. This chain is Ribosome maturation factor RimP, found in Salinibacter ruber (strain DSM 13855 / M31).